Consider the following 437-residue polypeptide: MTHYHFVGIKGAGMSSLAQIMHDLGHEVQGSDIEKYVFTEVALKNKGIKILPFNADNIKEGMVVIQGNAFPDTHEEIVKAHDLKLDVIRYHDFLGHVIDQYTSVAVTGAHGKTSTTGLLSHVMNGDKKTSFLIGDGTGMGLPASDYFAFEACEYRRHFLSYHPDYAIMTNIDFDHPDYFKDIDDVASAFQSMAHNVKKAIIAWGDDDHLRQLKADVPIYYYGLNKNDDIYADNIQITDKGTQFDVYVNGEYYDQFLSPQYGDHNIQNALAVIAISYLEKMDVNNIKEALETFGGVKRRFNETNVANQVLVDDYAHHPREISATIETARKKYPNKDIVAVFQPHTFSRTQAFLDEFATSLSKADHVYLCEIFGSIRENTGDLTIQDLINRIDGSALIEENNIDVLDQFDNAVILFMGAGDIQKLQRAYEEHVGMTNEF.

108–114 is a binding site for ATP; it reads GAHGKTS.

It belongs to the MurCDEF family.

The protein localises to the cytoplasm. It catalyses the reaction UDP-N-acetyl-alpha-D-muramate + L-alanine + ATP = UDP-N-acetyl-alpha-D-muramoyl-L-alanine + ADP + phosphate + H(+). The protein operates within cell wall biogenesis; peptidoglycan biosynthesis. In terms of biological role, cell wall formation. This chain is UDP-N-acetylmuramate--L-alanine ligase, found in Staphylococcus haemolyticus (strain JCSC1435).